The following is a 222-amino-acid chain: 2-hydroxy-3-keto-5-methylthiopentenyl-1-phosphate phosphatase (222 aa).

This sequence belongs to the HAD-like hydrolase superfamily. MtnX family.

It carries out the reaction 2-hydroxy-5-methylsulfanyl-3-oxopent-1-enyl phosphate + H2O = 1,2-dihydroxy-5-(methylsulfanyl)pent-1-en-3-one + phosphate. The protein operates within amino-acid biosynthesis; L-methionine biosynthesis via salvage pathway; L-methionine from S-methyl-5-thio-alpha-D-ribose 1-phosphate: step 4/6. Dephosphorylates 2-hydroxy-3-keto-5-methylthiopentenyl-1-phosphate (HK-MTPenyl-1-P) yielding 1,2-dihydroxy-3-keto-5-methylthiopentene (DHK-MTPene). This is 2-hydroxy-3-keto-5-methylthiopentenyl-1-phosphate phosphatase from Brevibacillus brevis (strain 47 / JCM 6285 / NBRC 100599).